Reading from the N-terminus, the 469-residue chain is Zinc transporter SLC39A7 (469 aa).

A helical transmembrane segment spans residues 5–25 (LGAPHWVAVGLLTWAALGLLV). Composition is skewed to basic and acidic residues over residues 43–56 (HGHSHRRSHEDFHH) and 66–114 (HTHE…EHSH). A disordered region spans residues 43–122 (HGHSHRRSHE…SHGGYGESGA (80 aa)). A Pros-methylhistidine modification is found at His66. 3 helical membrane passes run 138–158 (ALGATVLISAAPFFVLFLIPV), 169–189 (LQILLSFASGGLLGDAFLHLI), and 214–234 (GPILSVGLWVLSGIVAFLVVE). Residues 242 to 255 (GGHGHSHGHGHTHG) show a composition bias toward basic residues. The segment at 242–313 (GGHGHSHGHG…QNSEEEKTGS (72 aa)) is disordered. Positions 256–266 (HTQGSHGHGTQ) are enriched in low complexity. Phosphoserine occurs at positions 275 and 276. Residues 295-313 (RLKDGPLRPQNSEEEKTGS) show a composition bias toward basic and acidic residues. 3 helical membrane-spanning segments follow: residues 386-406 (LTAIGALAGTACALLTEGGAV), 417-437 (GWVLPFTAGGFIYVATVSVLP), and 448-468 (SLLEVLGLLGGVVMMVLIAHL).

The protein belongs to the ZIP transporter (TC 2.A.5) family. KE4/Catsup subfamily. Homodimer. Methylation at some His residue by METTL9 leads to reduced zinc-binding. In terms of processing, rapidly phosphorylated by CK2 following Zn(2+) treatment. This phosphorylation is required for efficient cytosolic Zn(2+) release.

The protein localises to the endoplasmic reticulum membrane. The protein resides in the golgi apparatus. It localises to the cis-Golgi network membrane. The catalysed reaction is Zn(2+)(in) = Zn(2+)(out). Its function is as follows. Transports Zn(2+) from the endoplasmic reticulum (ER)/Golgi apparatus to the cytosol, playing an essential role in the regulation of cytosolic zinc levels. Acts as a gatekeeper of zinc release from intracellular stores, requiring post-translational activation by phosphorylation, resulting in activation of multiple downstream pathways leading to cell growth and proliferation. Has an essential role in B cell development and is required for proper B cell receptor signaling. Plays an important role in maintaining intestinal epithelial homeostasis and skin dermis development by regulating ER function. Controls cell signaling pathways involved in glucose metabolism in skeletal muscle. Has a protective role against ER stress in different biological contexts. Mediates Zn(2+)-induced ferroptosis. The polypeptide is Zinc transporter SLC39A7 (Canis lupus familiaris (Dog)).